The chain runs to 625 residues: Tyrosine-protein kinase ITK/TSK (625 aa).

Residues 4–117 enclose the PH domain; sequence FILLEEQLIK…WVLTLKEETR (114 aa). The Btk-type zinc finger occupies 119–155; that stretch reads NNSLVSKYHPNFWMDGRWRCCSQLEKPAVGCAPYDPS. His127, Cys138, Cys139, and Cys149 together coordinate Zn(2+). A disordered region spans residues 153 to 174; the sequence is DPSKNASKKPLPPTPEDNRRSF. One can recognise an SH3 domain in the interval 177–237; it reads PEETLVIALY…PSSYLVEKSP (61 aa). Tyr186 is subject to Phosphotyrosine; by autocatalysis. Residues 245–343 enclose the SH2 domain; it reads WYNKSISRDK…GLVTRLRYPV (99 aa). A Protein kinase domain is found at 368–620; that stretch reads LTFVQEIGSG…SQLLSQLAEI (253 aa). Residues 374–382 and Lys396 contribute to the ATP site; that span reads IGSGQFGLV. The active-site Proton acceptor is Asp487. At Tyr517 the chain carries Phosphotyrosine; by LCK. Ser570 carries the phosphoserine modification.

Belongs to the protein kinase superfamily. Tyr protein kinase family. TEC subfamily. Homooligomerizes; this association negatively regulates kinase activity. Interacts with PPIA/CYPA; this interaction regulates TCR signal strength via a proline-directed conformational switch in ITK. Interacts with THEMIS. Interacts with FASLG. Interacts with VAV1; this interaction is important for VAV1 localization and TCR-induced actin polarization. Interacts with TBX21. The cofactor is Zn(2+). In terms of processing, phosphorylated at Tyr-517 in the activation loop of the kinase domain by LCK. Subsequent autophosphorylation at Tyr-186 leads to the kinase activation. The autophosphorylated Tyr-186 lies within the substrate binding sequence of the SH3 domain. Post-translationally, ubiquitinated. As to expression, is detected in the thymus, lymph node and very faintly in the spleen, but is not detected in the liver, lung, kidney, heart, brain, intestine or testis. Expressed in T-lymphocytes and mast cells. It may also be expressed in natural killer cells.

It localises to the cytoplasm. Its subcellular location is the nucleus. The enzyme catalyses L-tyrosyl-[protein] + ATP = O-phospho-L-tyrosyl-[protein] + ADP + H(+). Tyrosine kinase that plays an essential role in regulation of the adaptive immune response. Regulates the development, function and differentiation of conventional T-cells and nonconventional NKT-cells. When antigen presenting cells (APC) activate T-cell receptor (TCR), a series of phosphorylation lead to the recruitment of ITK to the cell membrane, in the vicinity of the stimulated TCR receptor, where it is phosphorylated by LCK. Phosphorylation leads to ITK autophosphorylation and full activation. Once activated, phosphorylates PLCG1, leading to the activation of this lipase and subsequent cleavage of its substrates. In turn, the endoplasmic reticulum releases calcium in the cytoplasm and the nuclear activator of activated T-cells (NFAT) translocates into the nucleus to perform its transcriptional duty. Phosphorylates 2 essential adapter proteins: the linker for activation of T-cells/LAT protein and LCP2. Then, a large number of signaling molecules such as VAV1 are recruited and ultimately lead to lymphokine production, T-cell proliferation and differentiation. Required for TCR-mediated calcium response in gamma-delta T-cells, may also be involved in the modulation of the transcriptomic signature in the Vgamma2-positive subset of immature gamma-delta T-cells. Phosphorylates TBX21 at 'Tyr-525' and mediates its interaction with GATA3. The chain is Tyrosine-protein kinase ITK/TSK (Itk) from Mus musculus (Mouse).